A 306-amino-acid polypeptide reads, in one-letter code: N-acetylmuramic acid 6-phosphate etherase (306 aa).

One can recognise an SIS domain in the interval 62 to 225 (IAQAFQNGGR…TTASMIRIGK (164 aa)). Glu90 acts as the Proton donor in catalysis. Residue Glu121 is part of the active site.

The protein belongs to the GCKR-like family. MurNAc-6-P etherase subfamily. In terms of assembly, homodimer.

It catalyses the reaction N-acetyl-D-muramate 6-phosphate + H2O = N-acetyl-D-glucosamine 6-phosphate + (R)-lactate. The protein operates within amino-sugar metabolism; 1,6-anhydro-N-acetylmuramate degradation. It participates in amino-sugar metabolism; N-acetylmuramate degradation. It functions in the pathway cell wall biogenesis; peptidoglycan recycling. Specifically catalyzes the cleavage of the D-lactyl ether substituent of MurNAc 6-phosphate, producing GlcNAc 6-phosphate and D-lactate. Together with AnmK, is also required for the utilization of anhydro-N-acetylmuramic acid (anhMurNAc) either imported from the medium or derived from its own cell wall murein, and thus plays a role in cell wall recycling. The chain is N-acetylmuramic acid 6-phosphate etherase from Vibrio atlanticus (strain LGP32) (Vibrio splendidus (strain Mel32)).